The sequence spans 443 residues: Putative transporter AmpG 1 (443 aa).

A run of 12 helical transmembrane segments spans residues 6 to 26 (HVCIIIWLFGFISGFNIMITG), 43 to 63 (IGILSFITLPYSINFLLAPVF), 74 to 96 (ILGHRLSWICLTSTTLISLTSIL), 106 to 128 (VLLSFIAFIISFFSATQDTILSA), 144 to 164 (GIYIFGYRVGMLLASSGAIYL), 172 to 192 (KIYQIFACVIFVYLILLILVS), 255 to 275 (DISLAYFIVLILIFLVLYRLP), 300 to 320 (VCKFCGVIGAIIGGLIGGIIM), 326 to 346 (LYSILLFGIIHALSHILFILL), 355 to 375 (ILFITIGIESITGGMTMTAYI), 394 to 414 (LSSMMGISRSIFPIISGYMVV), and 416 to 436 (FGWQNFFLFTTIITIPSLLIL).

This sequence belongs to the major facilitator superfamily.

It localises to the cell inner membrane. This Rickettsia typhi (strain ATCC VR-144 / Wilmington) protein is Putative transporter AmpG 1 (ampG1).